The primary structure comprises 349 residues: Glycerol-3-phosphate dehydrogenase [NAD(+)], cytoplasmic (349 aa).

NAD(+) is bound by residues 10–15, K120, and A153; that span reads GSGDWG. K120 is a substrate binding site. A Phosphoserine modification is found at S154. K204 serves as the catalytic Proton acceptor. R269 contacts NAD(+). Residue 269–270 coordinates substrate; that stretch reads RN. Residue K289 is modified to N6-succinyllysine. Residues K296 and Q298 each coordinate NAD(+). At Y326 the chain carries Phosphotyrosine.

It belongs to the NAD-dependent glycerol-3-phosphate dehydrogenase family. As to quaternary structure, homodimer.

The protein resides in the cytoplasm. The enzyme catalyses sn-glycerol 3-phosphate + NAD(+) = dihydroxyacetone phosphate + NADH + H(+). Its function is as follows. Has glycerol-3-phosphate dehydrogenase activity. The chain is Glycerol-3-phosphate dehydrogenase [NAD(+)], cytoplasmic (GPD1) from Oryctolagus cuniculus (Rabbit).